Consider the following 244-residue polypeptide: High affinity immunoglobulin epsilon receptor subunit beta (244 aa).

Residues 1-59 lie on the Cytoplasmic side of the membrane; the sequence is MDTESNRRANLALPQEPSSVPAFEVLEISPQEVSSGRLLKSASSPPLHTWLTVLKKEQE. Residues 60–79 traverse the membrane as a helical segment; the sequence is FLGVTQILTAMICLCFGTVV. At 80-97 the chain is on the extracellular side; it reads CSVLDISHIEGDIFSSFK. Residues 98–117 form a helical membrane-spanning segment; it reads AGYPFWGAIFFSISGMLSII. At 118 to 130 the chain is on the cytoplasmic side; the sequence is SERRNATYLVRGS. The chain crosses the membrane as a helical span at residues 131 to 150; it reads LGANTASSIAGGTGITILII. The Extracellular segment spans residues 151–180; sequence NLKKSLAYIHIHSCQKFFETKCFMASFSTE. Residues 181-200 traverse the membrane as a helical segment; sequence IVVMMLFLTILGLGSAVSLT. Residues 201–244 lie on the Cytoplasmic side of the membrane; the sequence is ICGAGEELKGNKVPEDRVYEELNIYSATYSELEDPGEMSPPIDL. Phosphotyrosine is present on residues tyrosine 219 and tyrosine 225. Serine 226 is subject to Phosphoserine. Position 229 is a phosphotyrosine (tyrosine 229).

It belongs to the MS4A family. Tetramer of an alpha chain, a beta chain, and two disulfide linked gamma chains. Binds LILRB1. Interacts with FGR, FES/FPS and LYN. Post-translationally, phosphorylated on tyrosine residues by LYN. In terms of tissue distribution, found on the surface of mast cells and basophils.

It localises to the membrane. Functionally, high affinity receptor that binds to the Fc region of immunoglobulins epsilon. Aggregation of FCER1 by multivalent antigens is required for the full mast cell response, including the release of preformed mediators (such as histamine) by degranulation and de novo production of lipid mediators and cytokines. Also mediates the secretion of important lymphokines. Binding of allergen to receptor-bound IgE leads to cell activation and the release of mediators responsible for the manifestations of allergy. The protein is High affinity immunoglobulin epsilon receptor subunit beta (MS4A2) of Homo sapiens (Human).